A 392-amino-acid chain; its full sequence is Succinate--CoA ligase [ADP-forming] subunit beta (392 aa).

Residues 9–236 (RDLFERHGLP…QAAVDPLEQA (228 aa)) enclose the ATP-grasp domain. ATP contacts are provided by residues Lys45, 52–54 (GRG), Ala94, and Glu99. Mg(2+) is bound by residues Asn191 and Asp205. Substrate contacts are provided by residues Asn256 and 318–320 (GIT).

The protein belongs to the succinate/malate CoA ligase beta subunit family. As to quaternary structure, heterotetramer of two alpha and two beta subunits. Mg(2+) serves as cofactor.

It carries out the reaction succinate + ATP + CoA = succinyl-CoA + ADP + phosphate. It catalyses the reaction GTP + succinate + CoA = succinyl-CoA + GDP + phosphate. It participates in carbohydrate metabolism; tricarboxylic acid cycle; succinate from succinyl-CoA (ligase route): step 1/1. Succinyl-CoA synthetase functions in the citric acid cycle (TCA), coupling the hydrolysis of succinyl-CoA to the synthesis of either ATP or GTP and thus represents the only step of substrate-level phosphorylation in the TCA. The beta subunit provides nucleotide specificity of the enzyme and binds the substrate succinate, while the binding sites for coenzyme A and phosphate are found in the alpha subunit. The chain is Succinate--CoA ligase [ADP-forming] subunit beta from Salinispora tropica (strain ATCC BAA-916 / DSM 44818 / JCM 13857 / NBRC 105044 / CNB-440).